The sequence spans 340 residues: Selenide, water dikinase (340 aa).

Residue C13 is part of the active site. ATP is bound by residues K16 and 43–45 (ASD). A Mg(2+)-binding site is contributed by D46. ATP contacts are provided by residues D63, D86, and 133-135 (GHS). D86 contacts Mg(2+). D221 contacts Mg(2+).

Belongs to the selenophosphate synthase 1 family. Class I subfamily. As to quaternary structure, homodimer. Mg(2+) is required as a cofactor.

It catalyses the reaction hydrogenselenide + ATP + H2O = selenophosphate + AMP + phosphate + 2 H(+). In terms of biological role, synthesizes selenophosphate from selenide and ATP. The polypeptide is Selenide, water dikinase (Desulfitobacterium hafniense (strain Y51)).